We begin with the raw amino-acid sequence, 318 residues long: GTP cyclohydrolase MptA (318 aa).

It belongs to the GTP cyclohydrolase IV family. In terms of assembly, homodimer. Requires Fe(2+) as cofactor.

It carries out the reaction GTP + H2O = 7,8-dihydroneopterin 2',3'-cyclic phosphate + formate + diphosphate + H(+). The protein operates within cofactor biosynthesis; 5,6,7,8-tetrahydromethanopterin biosynthesis. In terms of biological role, converts GTP to 7,8-dihydro-D-neopterin 2',3'-cyclic phosphate, the first intermediate in the biosynthesis of coenzyme methanopterin. This is GTP cyclohydrolase MptA from Methanothermobacter thermautotrophicus (strain ATCC 29096 / DSM 1053 / JCM 10044 / NBRC 100330 / Delta H) (Methanobacterium thermoautotrophicum).